Here is a 644-residue protein sequence, read N- to C-terminus: MSPRPLIELQDITRSFGEGELAVPVLKGIDLKIWPGEFVAIMGPSGSGKSTLMNILGCLDQPSAGQYRFNGRDVSALDRDELARLRRDAFGFVFQSYNLLPGMTARENVEIPAIYAGMAPAERHARAERLLTGLGLGERLSHRPAQLSGGQQQRVSIARALMNGGQLIFADEPTGALDSKSSQEVIRLLTDLSRQGHTIILITHDPDVAKVARRQIRIADGELVEDTGAEMPSAQIPETDQNGRRHSRLGDWQEALKSAVRSLHSNLFRTALTLLGIVIGVASVITMLAIGEGARKDVVDRISTMGSDLLLVRPGGPDQRGGRWSVTTLVPSDFKAINEIEGVLAAIPELTGGQTLRYSNRDHSAEINATSFRFPVARQWPVVEGTFFSAQDEASYAAVAVLGKTTANALFPDESPLGKHLMVNNVLFQVIGVMDEKGASPMGQDQDDVVFVPYTTGSLRIFGQTHLRNITVAVADIDRMDEIEALIHDTLMARHGIEDFTIRNMASLIETISETQNTLTWLLGSIAAISLLVGGIGVMNIMLVSVTERTREIGIRMATGARAWNILQQFLTEAWLVSAIGGLIGVVIGIAATRIIGSLGTPIHMTLLPMALAFGCAFATGLLFGFLPARKAAHLDPVHALASE.

The ABC transporter domain occupies 7–245; it reads IELQDITRSF…IPETDQNGRR (239 aa). ATP is bound at residue 43 to 50; the sequence is GPSGSGKS. A run of 4 helical transmembrane segments spans residues 271-291, 526-546, 570-590, and 607-627; these read ALTLLGIVIGVASVITMLAIG, IAAISLLVGGIGVMNIMLVSV, FLTEAWLVSAIGGLIGVVIGI, and LLPMALAFGCAFATGLLFGFL.

It belongs to the ABC transporter superfamily. Macrolide exporter (TC 3.A.1.122) family. As to quaternary structure, homodimer. Part of the tripartite efflux system MacAB-TolC, which is composed of an inner membrane transporter, MacB, a periplasmic membrane fusion protein, MacA, and an outer membrane component, TolC. The complex forms a large protein conduit and can translocate molecules across both the inner and outer membranes. Interacts with MacA.

The protein localises to the cell inner membrane. In terms of biological role, part of the tripartite efflux system MacAB-TolC. MacB is a non-canonical ABC transporter that contains transmembrane domains (TMD), which form a pore in the inner membrane, and an ATP-binding domain (NBD), which is responsible for energy generation. Confers resistance against macrolides. The chain is Macrolide export ATP-binding/permease protein MacB from Marinobacter nauticus (strain ATCC 700491 / DSM 11845 / VT8) (Marinobacter aquaeolei).